The sequence spans 511 residues: Glutamyl-tRNA(Gln) amidotransferase subunit A, mitochondrial (511 aa).

Residues K72 and S149 each act as charge relay system in the active site. S173 functions as the Acyl-ester intermediate in the catalytic mechanism.

The protein belongs to the amidase family. GatA subfamily. In terms of assembly, subunit of the heterotrimeric GatCAB amidotransferase (AdT) complex, composed of A, B and C subunits.

The protein localises to the mitochondrion. It catalyses the reaction L-glutamyl-tRNA(Gln) + L-glutamine + ATP + H2O = L-glutaminyl-tRNA(Gln) + L-glutamate + ADP + phosphate + H(+). Its function is as follows. Allows the formation of correctly charged Gln-tRNA(Gln) through the transamidation of misacylated Glu-tRNA(Gln) in the mitochondria. The reaction takes place in the presence of glutamine and ATP through an activated gamma-phospho-Glu-tRNA(Gln). The polypeptide is Glutamyl-tRNA(Gln) amidotransferase subunit A, mitochondrial (Fusarium vanettenii (strain ATCC MYA-4622 / CBS 123669 / FGSC 9596 / NRRL 45880 / 77-13-4) (Fusarium solani subsp. pisi)).